We begin with the raw amino-acid sequence, 1023 residues long: Solute carrier family 12 member 3 (1023 aa).

Residues 1–134 (MELPGDGVHL…EPPPEPPRFG (134 aa)) lie on the Cytoplasmic side of the membrane. Residues 91 to 131 (DPEQDDFKPPMYEETAGERMGGGDSSEEEEEEHKEPPPEPP) are disordered. Residues 135-164 (WVQGVMIRCMLNIWGVILYLRLPWITAQAG) form a discontinuously helical membrane-spanning segment. The Na(+) site is built by Leu145 and Trp148. The chain crosses the membrane as a helical span at residues 165–186 (IGLTWVIILLSSFITGITGLST). At 187–217 (SAIATNGKVKGGGTYFLISRSLGPELGGSIG) the chain is on the cytoplasmic side. Residues 218 to 240 (LIFAFANAVAVAMHTVGFAETVT) traverse the membrane as a helical segment. The Extracellular segment spans residues 241–252 (DLMRENGVVMVD). The next 2 membrane-spanning stretches (helical) occupy residues 253–277 (PIND…AGME) and 278–300 (WESK…YIVG). At 301–335 (TIIPASPQKQAKGFFSYKAEIFAANFVPGWRGKEG) the chain is on the extracellular side. A discontinuously helical membrane pass occupies residues 336–357 (SFFGMFSIFFPSATGILAGANI). 3 residues coordinate chloride: Gly350, Ile351, and Leu352. Residues 358-368 (SGDLKDPTVAI) lie on the Cytoplasmic side of the membrane. The helical transmembrane segment at 369 to 390 (PRGTLMAIFWTTISYLIISATI) threads the bilayer. Residues 391-452 (GACVVRDASG…YQSMSLVSAF (62 aa)) are Extracellular-facing. 2 N-linked (GlcNAc...) asparagine glycosylation sites follow: Asn403 and Asn414. Cystine bridges form between Cys415-Cys420 and Cys429-Cys435. The N-linked (GlcNAc...) asparagine glycan is linked to Asn432. The chain crosses the membrane as a helical span at residues 453 to 476 (APLISAGIFGATLSSALACLVSAP). Na(+)-binding residues include Ala463, Ser466, and Ser467. At 477 to 506 (KVFQCLCKDQLYPLIGFFGKGYGKNAEPLR) the chain is on the cytoplasmic side. Residues 507–521 (AYLLTYVIAVCFVLI) traverse the membrane as a helical segment. At 522–526 (AELNT) the chain is on the extracellular side. The chain crosses the membrane as a helical span at residues 527–543 (IAPIISNFFLCSYALIN). Tyr539 serves as a coordination point for chloride. At 544–566 (FSCFHASVTNSPGWRPSFRFYSK) the chain is on the cytoplasmic side. 2 helical membrane-spanning segments follow: residues 567–586 (WLSL…LTWW) and 587–598 (AALIAFGVVFFL). Residues 599–1023 (LGYTLYKKPA…QENVLTFYCQ (425 aa)) lie on the Cytoplasmic side of the membrane. The tract at residues 614-629 (SVQASSYSMALNQCVG) is scissor helix. Residues Leu647, Arg654, Val676, Gly733, and Leu772 each coordinate ATP.

It belongs to the SLC12A transporter family. Homodimer; adopts a domain-swap conformation at the scissor helices connecting the transmembrane domain and C-terminal domain. As to expression, expressed in urinary bladder, intestine, ovary, skeletal muscle, eye, brain, and kidney.

Its subcellular location is the cell membrane. The catalysed reaction is chloride(out) + Na(+)(out) = chloride(in) + Na(+)(in). Its activity is regulated as follows. Inhibited by thiazide-type diuretics including polythiazide, metolazone, cyclothiazide, hydrochlorothiazide and chlorthalidone. Thiazide drugs, specifically inhibit SLC12A3/NCC transporter activity by competing with chloride for binding. Functionally, electroneutral sodium and chloride ion cotransporter, with a coupling ratio 1 Na(+):1 Cl(-). Mediates sodium and chloride reabsorption. The sequence is that of Solute carrier family 12 member 3 (slc12a3) from Pseudopleuronectes americanus (Winter flounder).